A 3779-amino-acid chain; its full sequence is Protein DDB_G0268328 (3779 aa).

Disordered stretches follow at residues 24–56, 1001–1028, 1137–1165, 1513–1538, 1656–1690, 2027–2054, 2144–2184, 2280–2325, 2508–2527, 2720–2748, 2975–3030, and 3427–3450; these read RQIK…KDGS, HEDE…DDDD, QDST…QQQQ, PTNS…SLLS, ETTV…NNKE, SNSS…DSNN, NNNN…NNSS, ISTT…NEQQ, QINN…REEG, DGNN…NDSS, ESND…DSIK, and QSNT…SGKL. Composition is skewed to low complexity over residues 26-56, 1011-1020, 1149-1165, and 1515-1538; these read IKSQ…KDGS, DNSNNSNSQD, YYHQ…QQQQ, and NSIY…SLLS. Residues 1656–1671 show a composition bias toward basic and acidic residues; the sequence is ETTVLEKETKETKDNN. Over residues 1672–1687 the composition is skewed to low complexity; that stretch reads LENNNNNTNNSNNNNN. 2 stretches are compositionally biased toward low complexity: residues 2144-2182 and 2285-2322; these read NNNN…NNNN. Low complexity-rich tracts occupy residues 2722–2745 and 3015–3030; these read NNNN…QNNN and SVNN…DSIK. Over residues 3433–3446 the composition is skewed to gly residues; the sequence is GTGGGGGNGGGNNG.

This chain is Protein DDB_G0268328, found in Dictyostelium discoideum (Social amoeba).